The following is a 620-amino-acid chain: 1-deoxy-D-xylulose-5-phosphate synthase (620 aa).

Thiamine diphosphate contacts are provided by residues histidine 80 and 121–123 (GHS). Mg(2+) is bound at residue aspartate 152. Residues 153 to 154 (GA), asparagine 181, tyrosine 288, and glutamate 370 each bind thiamine diphosphate. Residue asparagine 181 participates in Mg(2+) binding.

The protein belongs to the transketolase family. DXPS subfamily. In terms of assembly, homodimer. The cofactor is Mg(2+). Thiamine diphosphate is required as a cofactor.

The enzyme catalyses D-glyceraldehyde 3-phosphate + pyruvate + H(+) = 1-deoxy-D-xylulose 5-phosphate + CO2. The protein operates within metabolic intermediate biosynthesis; 1-deoxy-D-xylulose 5-phosphate biosynthesis; 1-deoxy-D-xylulose 5-phosphate from D-glyceraldehyde 3-phosphate and pyruvate: step 1/1. Catalyzes the acyloin condensation reaction between C atoms 2 and 3 of pyruvate and glyceraldehyde 3-phosphate to yield 1-deoxy-D-xylulose-5-phosphate (DXP). This Salmonella arizonae (strain ATCC BAA-731 / CDC346-86 / RSK2980) protein is 1-deoxy-D-xylulose-5-phosphate synthase.